The primary structure comprises 697 residues: Gametogenetin-binding protein 2 (697 aa).

S360 bears the Phosphoserine mark.

In terms of assembly, interacts with GGN. Expressed in heart, brain, placenta, lung, liver, skeletal muscle, kidney and pancreas. Expressed more abundantly in heart, pancreas and skeletal muscle.

It is found in the cytoplasmic vesicle. In terms of biological role, may be involved in spermatogenesis. This Homo sapiens (Human) protein is Gametogenetin-binding protein 2 (GGNBP2).